The chain runs to 187 residues: dITP/XTP pyrophosphatase (187 aa).

7–12 lines the substrate pocket; that stretch reads TNNPYK. Residues Glu-36 and Asp-65 each coordinate Mg(2+). Asp-65 serves as the catalytic Proton acceptor. Substrate-binding positions include Thr-66, 140–143, Lys-163, and 168–169; these read FGYD and HR.

Belongs to the HAM1 NTPase family. In terms of assembly, homodimer. Requires Mg(2+) as cofactor.

It catalyses the reaction XTP + H2O = XMP + diphosphate + H(+). It carries out the reaction dITP + H2O = dIMP + diphosphate + H(+). The enzyme catalyses ITP + H2O = IMP + diphosphate + H(+). In terms of biological role, pyrophosphatase that catalyzes the hydrolysis of nucleoside triphosphates to their monophosphate derivatives, with a high preference for the non-canonical purine nucleotides XTP (xanthosine triphosphate), dITP (deoxyinosine triphosphate) and ITP. Seems to function as a house-cleaning enzyme that removes non-canonical purine nucleotides from the nucleotide pool, thus preventing their incorporation into DNA/RNA and avoiding chromosomal lesions. The polypeptide is dITP/XTP pyrophosphatase (Pyrobaculum aerophilum (strain ATCC 51768 / DSM 7523 / JCM 9630 / CIP 104966 / NBRC 100827 / IM2)).